The sequence spans 725 residues: Polyribonucleotide nucleotidyltransferase (725 aa).

The Mg(2+) site is built by aspartate 506 and aspartate 512. The 61-residue stretch at 571–631 (PLIEQFAIDP…QNIIDACEHI (61 aa)) folds into the KH domain. The 68-residue stretch at 657-724 (DEVVIGKVER…KKDRIELSSA (68 aa)) folds into the S1 motif domain.

It belongs to the polyribonucleotide nucleotidyltransferase family. Mg(2+) is required as a cofactor.

It is found in the cytoplasm. The enzyme catalyses RNA(n+1) + phosphate = RNA(n) + a ribonucleoside 5'-diphosphate. Involved in mRNA degradation. Catalyzes the phosphorolysis of single-stranded polyribonucleotides processively in the 3'- to 5'-direction. The sequence is that of Polyribonucleotide nucleotidyltransferase from Aliarcobacter butzleri (strain RM4018) (Arcobacter butzleri).